The chain runs to 185 residues: ATP-dependent protease subunit HslV (185 aa).

T12 is a catalytic residue. Na(+) is bound by residues A168, C171, and T174.

Belongs to the peptidase T1B family. HslV subfamily. A double ring-shaped homohexamer of HslV is capped on each side by a ring-shaped HslU homohexamer. The assembly of the HslU/HslV complex is dependent on binding of ATP.

It localises to the cytoplasm. It carries out the reaction ATP-dependent cleavage of peptide bonds with broad specificity.. Allosterically activated by HslU binding. Functionally, protease subunit of a proteasome-like degradation complex believed to be a general protein degrading machinery. The chain is ATP-dependent protease subunit HslV from Cereibacter sphaeroides (strain ATCC 17023 / DSM 158 / JCM 6121 / CCUG 31486 / LMG 2827 / NBRC 12203 / NCIMB 8253 / ATH 2.4.1.) (Rhodobacter sphaeroides).